The sequence spans 263 residues: N-acyl homoserine lactonase AttM (263 aa).

The Zn(2+) site is built by His103, His105, Asp107, His108, His180, Asp202, and His247.

This sequence belongs to the metallo-beta-lactamase superfamily. Requires Zn(2+) as cofactor.

It catalyses the reaction an N-acyl-L-homoserine lactone + H2O = an N-acyl-L-homoserine + H(+). The chain is N-acyl homoserine lactonase AttM (attM) from Rhizobium radiobacter (Agrobacterium tumefaciens).